Consider the following 195-residue polypeptide: Probable molybdenum cofactor guanylyltransferase (195 aa).

GTP is bound by residues 8–10, lysine 20, aspartate 65, and aspartate 96; that span reads LSG. Aspartate 96 serves as a coordination point for Mg(2+).

Belongs to the MobA family. It depends on Mg(2+) as a cofactor.

The protein resides in the cytoplasm. It carries out the reaction Mo-molybdopterin + GTP + H(+) = Mo-molybdopterin guanine dinucleotide + diphosphate. In terms of biological role, transfers a GMP moiety from GTP to Mo-molybdopterin (Mo-MPT) cofactor (Moco or molybdenum cofactor) to form Mo-molybdopterin guanine dinucleotide (Mo-MGD) cofactor. The chain is Probable molybdenum cofactor guanylyltransferase from Bacillus licheniformis (strain ATCC 14580 / DSM 13 / JCM 2505 / CCUG 7422 / NBRC 12200 / NCIMB 9375 / NCTC 10341 / NRRL NRS-1264 / Gibson 46).